The primary structure comprises 655 residues: MLSVPHLDRDFDYLVPAEHSDDAQPGVRVRVRFHGRLVDGFVLERRSDSDHHGKLGWLDRVVSPEPVLTTEIRRLVDAVAARYAGTRQDVLRLAVPARHARVEREITTAPGRPVVAPVDPSGWAAYGRGRQFLAALADSRAARAVWQALPGELWADRFAEAAAQTVRAGRTVLAIVPDQRDLDTLWQAATALVDEHSVVALSAGLGPEARYRRWLAALRGSARLVIGTRSAVFAPLSELGLVMVWADADDSLAEPRAPYPHAREVAMLRAHQARCAALIGGYARTAEAHALVRSGWAHDVVAPRPEVRARSPRVVALDDSGYDDARDPAARTARLPSIALRAARSALQSGAPVLVQVPRRGYIPSLACGRCRAIARCRSCTGPLSLQGAGSPGAVCRWCGRVDPTLRCVRCGSDVVRAVVVGARRTAEELGRAFPGTAVITSAGDTLVPQLDAGPALVVATPGAEPRAPGGYGAALLLDSWALLGRQDLRAAEDALWRWMTAAALVRPRGAGGVVTVVAESSIPTVQSLIRWDPVGHAEAELAARTEVGLPPSVHIAALDGPAGTVTALLEAARLPDPDRLQADLLGPVDLPPGVRRPAGIPADAPVIRMLLRVCREQGLELAASLRRGIGVLSARQTRQTRSLVRVQIDPLHIG.

Cys-368, Cys-371, Cys-377, Cys-380, Cys-396, Cys-399, Cys-408, and Cys-411 together coordinate Zn(2+).

The protein belongs to the helicase family. PriA subfamily. In terms of assembly, component of the replication restart primosome. Zn(2+) is required as a cofactor.

In terms of biological role, initiates the restart of stalled replication forks, which reloads the replicative helicase on sites other than the origin of replication. Recognizes and binds to abandoned replication forks and remodels them to uncover a helicase loading site. Promotes assembly of the primosome at these replication forks. In Mycobacterium bovis (strain ATCC BAA-935 / AF2122/97), this protein is Probable replication restart protein PriA.